We begin with the raw amino-acid sequence, 228 residues long: MRKGEVLKLGIVPYMEGKEIQLKAFERVKKGETDGILILLQHPPVYTIGVSGGFDENILVPLAELKKKAELYKVERGGKITFHGPGQIVAYPIFNLAKWQKDVHLFVYKLEETIIKLLEEYGIKAGRKPKYTGVWVGDEKICAIGIAVRRWITWHGIAFNVNTDLSYFGLINACGITEFGVTSMQKLGINEDIEKVKEKMVDKFSEVFGIHFNEITLDRLAVIDNAKA.

Residues 31-212 (GETDGILILL…KFSEVFGIHF (182 aa)) enclose the BPL/LPL catalytic domain. Substrate contacts are provided by residues 76–83 (RGGKITFH), 143–145 (AIG), and 156–158 (GIA). Cys-174 (acyl-thioester intermediate) is an active-site residue.

This sequence belongs to the LipB family.

The protein resides in the cytoplasm. It catalyses the reaction octanoyl-[ACP] + L-lysyl-[protein] = N(6)-octanoyl-L-lysyl-[protein] + holo-[ACP] + H(+). Its pathway is protein modification; protein lipoylation via endogenous pathway; protein N(6)-(lipoyl)lysine from octanoyl-[acyl-carrier-protein]: step 1/2. In terms of biological role, catalyzes the transfer of endogenously produced octanoic acid from octanoyl-acyl-carrier-protein onto the lipoyl domains of lipoate-dependent enzymes. Lipoyl-ACP can also act as a substrate although octanoyl-ACP is likely to be the physiological substrate. This is Octanoyltransferase from Thermoanaerobacter pseudethanolicus (strain ATCC 33223 / 39E) (Clostridium thermohydrosulfuricum).